Here is an 84-residue protein sequence, read N- to C-terminus: Mu-conotoxin-like Cal 12.2a (84 aa).

An N-terminal signal peptide occupies residues 1 to 19 (MKLTCVLVVLLLVLPFGDL). Residues 20-42 (ITTSNTEDNKRGATPWQNSLKAR) constitute a propeptide that is removed on maturation. 4 disulfide bridges follow: Cys-45-Cys-57, Cys-52-Cys-65, Cys-59-Cys-70, and Cys-64-Cys-76. Pro-48 is subject to 4-hydroxyproline. Position 72 is a 6'-bromotryptophan (Trp-72). Pro-77 is modified (4-hydroxyproline). Trp-81 is subject to 6'-bromotryptophan.

It belongs to the conotoxin O1 superfamily. Expressed by the venom duct.

It localises to the secreted. Its function is as follows. Mu-conotoxins block voltage-gated sodium channels. This toxin reversibly blocks voltage-gated sodium channel in cephalopods, with no alteration in the voltage dependence of sodium conductance or on the kinetics of inactivation. This is Mu-conotoxin-like Cal 12.2a from Californiconus californicus (California cone).